Consider the following 107-residue polypeptide: Integration host factor (107 aa).

A disordered region spans residues 1-20 (MALPPLTPEQRAAALEKAAA). The segment covering 9–18 (EQRAAALEKA) has biased composition (low complexity). Lys54 is a DNA binding site. Residues 64–71 (LPGVGKVR) carry the H2TH motif, binds DNA motif. DNA is bound by residues Ser82, Arg85, Arg88, Ser92, Asn93, and Gln94. The segment at 82 to 94 (SESRRVRGLGSNQ) is lid, binds DNA.

Belongs to the actinobacterial IHF (aIHF) family. Monomer.

It is found in the cytoplasm. It localises to the spore. The protein localises to the nucleoid. Its function is as follows. A nucleoid-associated protein (NAP) that probably plays a role in chromosome compactation. Contributes to development and secondary metabolism, but is dispensable for growth and viability. Binds to the promoter region of a number of genes (including itself); multiple molecules of the protein bind to the DNA simultaneously, deletion alters the expression of about 30 genes (both up- and down-regulation occurs). Plays a role in controlling viability. Binds dsDNA without any obvious sequence specificity, in a concentration and length-dependent manner. Promotes supercoiling in a topoisomerase-dependent manner (counteracts TopA plasmid relaxation). Binds DNA as a monomer, contacting 8 base pairs via the phosphate backbone; each monomer can bind 2 DNA duplexes, allowing a bridging function. Alters DNA topology, constraining negative supercoils, possibly by DNA twist. Longer dsDNA binds more than one sIHF subunit. This Streptomyces coelicolor (strain ATCC BAA-471 / A3(2) / M145) protein is Integration host factor.